Here is a 160-residue protein sequence, read N- to C-terminus: Probable chemoreceptor glutamine deamidase CheD (160 aa).

This sequence belongs to the CheD family.

It catalyses the reaction L-glutaminyl-[protein] + H2O = L-glutamyl-[protein] + NH4(+). Functionally, probably deamidates glutamine residues to glutamate on methyl-accepting chemotaxis receptors (MCPs), playing an important role in chemotaxis. The protein is Probable chemoreceptor glutamine deamidase CheD of Desulfitobacterium hafniense (strain DSM 10664 / DCB-2).